A 126-amino-acid polypeptide reads, in one-letter code: Aspartate 1-decarboxylase 1 (126 aa).

Serine 25 functions as the Schiff-base intermediate with substrate; via pyruvic acid in the catalytic mechanism. Serine 25 is subject to Pyruvic acid (Ser). Residue threonine 57 participates in substrate binding. Tyrosine 58 functions as the Proton donor in the catalytic mechanism. Glycine 73–alanine 75 contacts substrate.

This sequence belongs to the PanD family. Heterooctamer of four alpha and four beta subunits. Pyruvate serves as cofactor. In terms of processing, is synthesized initially as an inactive proenzyme, which is activated by self-cleavage at a specific serine bond to produce a beta-subunit with a hydroxyl group at its C-terminus and an alpha-subunit with a pyruvoyl group at its N-terminus.

The protein localises to the cytoplasm. It carries out the reaction L-aspartate + H(+) = beta-alanine + CO2. The protein operates within cofactor biosynthesis; (R)-pantothenate biosynthesis; beta-alanine from L-aspartate: step 1/1. In terms of biological role, catalyzes the pyruvoyl-dependent decarboxylation of aspartate to produce beta-alanine. This is Aspartate 1-decarboxylase 1 from Polaromonas sp. (strain JS666 / ATCC BAA-500).